The following is a 386-amino-acid chain: Putative prophage major tail sheath protein (386 aa).

This sequence belongs to the myoviridae tail sheath protein family.

The protein localises to the secreted. The polypeptide is Putative prophage major tail sheath protein (Pseudomonas aeruginosa (strain UCBPP-PA14)).